A 307-amino-acid polypeptide reads, in one-letter code: GTPase Era (307 aa).

The Era-type G domain maps to 13 to 180 (RCGFVALIGA…RRALAEMVPP (168 aa)). Positions 21 to 28 (GAPNVGKS) are G1. 21 to 28 (GAPNVGKS) serves as a coordination point for GTP. Residues 47-51 (QTTRA) form a G2 region. Residues 68–71 (DTPG) are G3. Residues 68–72 (DTPGI) and 130–133 (NKVD) each bind GTP. The G4 stretch occupies residues 130–133 (NKVD). The segment at 159–161 (ISA) is G5. The KH type-2 domain occupies 211-288 (LHQELPYQST…HLFLFVKVRE (78 aa)).

Belongs to the TRAFAC class TrmE-Era-EngA-EngB-Septin-like GTPase superfamily. Era GTPase family. Monomer.

It localises to the cytoplasm. The protein resides in the cell inner membrane. Functionally, an essential GTPase that binds both GDP and GTP, with rapid nucleotide exchange. Plays a role in 16S rRNA processing and 30S ribosomal subunit biogenesis and possibly also in cell cycle regulation and energy metabolism. This is GTPase Era from Bradyrhizobium sp. (strain ORS 278).